A 373-amino-acid polypeptide reads, in one-letter code: tRNA-specific 2-thiouridylase MnmA (373 aa).

Residues 18–25 and Leu44 contribute to the ATP site; that span reads AMSGGVDS. The Nucleophile role is filled by Cys117. Residues Cys117 and Cys214 are joined by a disulfide bond. Gly141 is an ATP binding site. The segment at 163–165 is interaction with tRNA; it reads RDQ. Cys214 (cysteine persulfide intermediate) is an active-site residue.

Belongs to the MnmA/TRMU family.

It localises to the cytoplasm. The enzyme catalyses S-sulfanyl-L-cysteinyl-[protein] + uridine(34) in tRNA + AH2 + ATP = 2-thiouridine(34) in tRNA + L-cysteinyl-[protein] + A + AMP + diphosphate + H(+). Catalyzes the 2-thiolation of uridine at the wobble position (U34) of tRNA, leading to the formation of s(2)U34. The polypeptide is tRNA-specific 2-thiouridylase MnmA (Paramagnetospirillum magneticum (strain ATCC 700264 / AMB-1) (Magnetospirillum magneticum)).